Consider the following 476-residue polypeptide: Glutathione synthetase (476 aa).

Position 117 (Arg117) interacts with substrate. Glu137 contributes to the ATP binding site. Residues Glu137 and Asn139 each coordinate Mg(2+). Substrate-binding positions include 141 to 144 (ISSS), 211 to 213 (ERN), Gln217, and 267 to 270 (RAGY). ATP is bound by residues Lys308, 367-376 (KPQREGGGNN), Tyr378, 400-403 (MDKI), and Glu426. Residue Glu371 coordinates Mg(2+). A substrate-binding site is contributed by Arg452. ATP-binding residues include Lys454 and Glu460. 463–464 (VA) contributes to the substrate binding site.

It belongs to the eukaryotic GSH synthase family. In terms of assembly, homodimer. Mg(2+) serves as cofactor.

The enzyme catalyses gamma-L-glutamyl-L-cysteine + glycine + ATP = glutathione + ADP + phosphate + H(+). Its pathway is sulfur metabolism; glutathione biosynthesis; glutathione from L-cysteine and L-glutamate: step 2/2. In Dictyostelium discoideum (Social amoeba), this protein is Glutathione synthetase (gshB).